Reading from the N-terminus, the 364-residue chain is Probable cysteine protease RDL4 (364 aa).

A signal peptide spans 1–23; it reads MGSAKSAMLILLVAMVIASCATA. Positions 24-136 are cleaved as a propeptide — activation peptide; it reads IDMSVVSYDD…DRYKTSADDV (113 aa). N-linked (GlcNAc...) asparagine glycosylation is present at Asn87. 3 disulfide bridges follow: Cys158–Cys199, Cys192–Cys232, and Cys291–Cys342. Residue Cys161 is part of the active site. Residues His297 and Asn317 contribute to the active site.

It belongs to the peptidase C1 family. As to expression, expressed in inflorescences.

Functionally, probable thiol protease. This is Probable cysteine protease RDL4 from Arabidopsis thaliana (Mouse-ear cress).